The chain runs to 552 residues: T-box transcription factor TBX4 (552 aa).

Over residues 1–14 (MLQDKGLSESEEAF) the composition is skewed to basic and acidic residues. The disordered stretch occupies residues 1-50 (MLQDKGLSESEEAFRAPGPALGEASNTSTTNAPEPALATPGLSGAALSSP). Residues 76–256 (LHEKELWKKF…NNPFAKGFRG (181 aa)) constitute a DNA-binding region (T-box). The residue at position 514 (Ser514) is a Phosphoserine.

Its subcellular location is the nucleus. Its function is as follows. Transcriptional regulator that has an essential role in the organogenesis of lungs, pelvis, and hindlimbs. In Mus musculus (Mouse), this protein is T-box transcription factor TBX4 (Tbx4).